We begin with the raw amino-acid sequence, 979 residues long: Chromosome partition protein Smc (979 aa).

ATP is bound at residue Pro-33–Asn-40. A coiled-coil region spans residues Ser-169–Asn-400. An SMC hinge domain is found at Asp-419–Ala-538. Coiled-coil stretches lie at residues Ile-572–Ser-716 and Ser-750–Ile-818.

It belongs to the SMC family. As to quaternary structure, homodimer.

The protein resides in the cytoplasm. Functionally, required for chromosome condensation and partitioning. In Mesomycoplasma hyorhinis (Mycoplasma hyorhinis), this protein is Chromosome partition protein Smc.